We begin with the raw amino-acid sequence, 310 residues long: Apolipoprotein E (310 aa).

A signal peptide spans 1-18; it reads MKVLWPALVVTLLAGCRA. Tandem repeats lie at residues 77-98, 99-120, 121-142, 143-164, 165-186, 187-208, 209-226, and 227-248. Positions 77–248 are 8 X 22 AA approximate tandem repeats; sequence ALMDDTMKEV…RLDEVREQVQ (172 aa). An LDL and other lipoprotein receptors binding region spans residues 155 to 165; sequence HLRKLRKRLLR. 159-162 is a heparin binding site; that stretch reads LRKR. Residues 207-283 form a lipid-binding and lipoprotein association region; it reads HTLVSKPLQE…SWFEPLVQDM (77 aa). 222 to 229 is a binding site for heparin; sequence AQRLRGRL. Residues 259–310 form a homooligomerization region; sequence NQVRLQAEAFQGRLKSWFEPLVQDMQQKWAELVEKVQLALRAVPTSVPSEKQ. The segment at 271 to 283 is specificity for association with VLDL; sequence RLKSWFEPLVQDM.

This sequence belongs to the apolipoprotein A1/A4/E family. As to quaternary structure, homotetramer. May interact with ABCA1; functionally associated with ABCA1 in the biogenesis of HDLs. May interact with APP/A4 amyloid-beta peptide; the interaction is extremely stable in vitro but its physiological significance is unclear. May interact with MAPT. May interact with MAP2. In the cerebrospinal fluid, interacts with secreted SORL1. Interacts with PMEL; this allows the loading of PMEL luminal fragment on ILVs to induce fibril nucleation. Post-translationally, APOE exists as multiple glycosylated and sialylated glycoforms within cells and in plasma. The extent of glycosylation and sialylation are tissue and context specific. In terms of processing, glycated in plasma VLDL. Phosphorylated by FAM20C in the extracellular medium.

The protein localises to the secreted. It is found in the extracellular space. Its subcellular location is the extracellular matrix. It localises to the extracellular vesicle. The protein resides in the endosome. The protein localises to the multivesicular body. APOE is an apolipoprotein, a protein associating with lipid particles, that mainly functions in lipoprotein-mediated lipid transport between organs via the plasma and interstitial fluids. APOE is a core component of plasma lipoproteins and is involved in their production, conversion and clearance. Apolipoproteins are amphipathic molecules that interact both with lipids of the lipoprotein particle core and the aqueous environment of the plasma. As such, APOE associates with chylomicrons, chylomicron remnants, very low density lipoproteins (VLDL) and intermediate density lipoproteins (IDL) but shows a preferential binding to high-density lipoproteins (HDL). It also binds a wide range of cellular receptors including the LDL receptor/LDLR and the very low-density lipoprotein receptor/VLDLR that mediate the cellular uptake of the APOE-containing lipoprotein particles. Finally, APOE also has a heparin-binding activity and binds heparan-sulfate proteoglycans on the surface of cells, a property that supports the capture and the receptor-mediated uptake of APOE-containing lipoproteins by cells. This chain is Apolipoprotein E (APOE), found in Dicerorhinus sumatrensis harrissoni (Bornean rhinoceros).